Reading from the N-terminus, the 856-residue chain is DNA gyrase subunit A (856 aa).

Positions 45-517 (LPDARDGLKP…DDGTVTHEDL (473 aa)) constitute a Topo IIA-type catalytic domain. Tyr-133 functions as the O-(5'-phospho-DNA)-tyrosine intermediate in the catalytic mechanism. The GyrA-box motif lies at 544–550 (QHRGGKG). The tract at residues 822-856 (TVASVDTHPRTDDSSEADSGDGESESENATATTPS) is disordered. Residues 835–847 (SSEADSGDGESES) are compositionally biased toward acidic residues.

This sequence belongs to the type II topoisomerase GyrA/ParC subunit family. As to quaternary structure, heterotetramer, composed of two GyrA and two GyrB chains. In the heterotetramer, GyrA contains the active site tyrosine that forms a transient covalent intermediate with DNA, while GyrB binds cofactors and catalyzes ATP hydrolysis.

It is found in the cytoplasm. The enzyme catalyses ATP-dependent breakage, passage and rejoining of double-stranded DNA.. Functionally, a type II topoisomerase that negatively supercoils closed circular double-stranded (ds) DNA in an ATP-dependent manner to modulate DNA topology and maintain chromosomes in an underwound state. Negative supercoiling favors strand separation, and DNA replication, transcription, recombination and repair, all of which involve strand separation. Also able to catalyze the interconversion of other topological isomers of dsDNA rings, including catenanes and knotted rings. Type II topoisomerases break and join 2 DNA strands simultaneously in an ATP-dependent manner. The protein is DNA gyrase subunit A of Haloquadratum walsbyi (strain DSM 16790 / HBSQ001).